The primary structure comprises 264 residues: Thymidylate synthase (264 aa).

Residue Arg-21 coordinates dUMP. His-51 lines the (6R)-5,10-methylene-5,6,7,8-tetrahydrofolate pocket. 126-127 (RR) serves as a coordination point for dUMP. The Nucleophile role is filled by Cys-146. DUMP is bound by residues 166–169 (RSAD), Asn-177, and 207–209 (HLY). Asp-169 serves as a coordination point for (6R)-5,10-methylene-5,6,7,8-tetrahydrofolate. Ala-263 lines the (6R)-5,10-methylene-5,6,7,8-tetrahydrofolate pocket.

The protein belongs to the thymidylate synthase family. Bacterial-type ThyA subfamily. Homodimer.

The protein resides in the cytoplasm. It carries out the reaction dUMP + (6R)-5,10-methylene-5,6,7,8-tetrahydrofolate = 7,8-dihydrofolate + dTMP. The protein operates within pyrimidine metabolism; dTTP biosynthesis. Catalyzes the reductive methylation of 2'-deoxyuridine-5'-monophosphate (dUMP) to 2'-deoxythymidine-5'-monophosphate (dTMP) while utilizing 5,10-methylenetetrahydrofolate (mTHF) as the methyl donor and reductant in the reaction, yielding dihydrofolate (DHF) as a by-product. This enzymatic reaction provides an intracellular de novo source of dTMP, an essential precursor for DNA biosynthesis. The chain is Thymidylate synthase from Cupriavidus necator (strain ATCC 17699 / DSM 428 / KCTC 22496 / NCIMB 10442 / H16 / Stanier 337) (Ralstonia eutropha).